Reading from the N-terminus, the 220-residue chain is GTP-binding nuclear protein GSP2/CNR2 (220 aa).

Serine 2 is modified (N-acetylserine). Position 2 is a phosphoserine (serine 2). The Small GTPase Ran-type domain occupies 10–174 (EVPTFKLVLV…LWLARKLAGN (165 aa)). 21-28 (DGGTGKTT) contacts GTP. The interval 40-48 (KKYIATIGV) is switch-I. Residues glycine 71, 125–128 (NKVD), and 153–155 (SAK) contribute to the GTP site. Residues 71 to 87 (GQEKFGGLRDGYYINAQ) are switch-II.

The protein belongs to the small GTPase superfamily. Ran family. As to quaternary structure, found in a nuclear export complex with RanGTP, exportin and pre-miRNA.

It is found in the nucleus. In terms of biological role, GTP-binding protein involved in nucleocytoplasmic transport. Required for the import of protein into the nucleus and also for RNA export. Not essential for cell viability. This is GTP-binding nuclear protein GSP2/CNR2 (GSP2) from Saccharomyces cerevisiae (strain ATCC 204508 / S288c) (Baker's yeast).